Reading from the N-terminus, the 199-residue chain is Protein MM_0484 (199 aa).

Positions 5 to 196 (TEGRAAVKLA…EKEPDGEVIE (192 aa)) constitute an AMMECR1 domain.

This Methanosarcina mazei (strain ATCC BAA-159 / DSM 3647 / Goe1 / Go1 / JCM 11833 / OCM 88) (Methanosarcina frisia) protein is Protein MM_0484.